The primary structure comprises 232 residues: tRNA1(Val) (adenine(37)-N6)-methyltransferase (232 aa).

It belongs to the methyltransferase superfamily. tRNA (adenine-N(6)-)-methyltransferase family.

It localises to the cytoplasm. The catalysed reaction is adenosine(37) in tRNA1(Val) + S-adenosyl-L-methionine = N(6)-methyladenosine(37) in tRNA1(Val) + S-adenosyl-L-homocysteine + H(+). Specifically methylates the adenine in position 37 of tRNA(1)(Val) (anticodon cmo5UAC). The sequence is that of tRNA1(Val) (adenine(37)-N6)-methyltransferase from Haemophilus influenzae (strain PittGG).